We begin with the raw amino-acid sequence, 432 residues long: MRLLGAHRAALLVLACVVVVVIHGLGEAEALGGGGGFVRAQGTRFVLDGNPYYANGFNAYWLMLLAADPSQRGKVSAALGEAAGHGLTVARTWAFSDGGGGNALQLSPGNYNENTFKGLDFVLSEARKYGIKVILSLVDNYDSFGGRKQYVNWARAQGQGIGSDDEFFTNPVVKGFYKNHVKTVLTRKNTITGVAYRDDPTILAWELMNEPRCQSDLSGRTVQSWITEMAAHVKSIDRNHMLEVGLEGFYGASSPSRIAAVNPSGYQLGTDFIANNQVPGIDFATVHSYPDQWLSGKDDQAQLGFMGRWLDAHIADAQAVLRKPLLIAEFGKSWKDPGYSSGQRDALYGTVYAKIYESARRGGATVGGLFWQLLVPGMDSYRDGYEVVFGETPSTTGVITTNSRRLRFLSKAFARARQAQPARGKGRHNGGK.

Positions 1-28 (MRLLGAHRAALLVLACVVVVVIHGLGEA) are cleaved as a signal peptide. 2 residues coordinate substrate: tryptophan 93 and asparagine 209. Glutamate 210 serves as the catalytic Proton donor. Residue tyrosine 289 coordinates substrate. The Nucleophile role is filled by glutamate 329. Tryptophan 371 provides a ligand contact to substrate.

The protein belongs to the glycosyl hydrolase 5 (cellulase A) family. Ubiquitous.

The protein localises to the secreted. It catalyses the reaction Random hydrolysis of (1-&gt;4)-beta-D-mannosidic linkages in mannans, galactomannans and glucomannans.. In Oryza sativa subsp. japonica (Rice), this protein is Mannan endo-1,4-beta-mannosidase 1 (MAN1).